A 536-amino-acid chain; its full sequence is Cytochrome c oxidase subunit 1 (536 aa).

The chain crosses the membrane as a helical span at residues 19–39; sequence IGMTYLGFGMLSAMMGTGMSV. Residue E44 coordinates Ca(2+). H67 contacts Fe(II)-heme a. The next 6 helical transmembrane spans lie at 69-89, 103-123, 152-172, 188-208, 240-260, and 273-293; these read LLMM…NFFL, LNNI…CSVL, AMFA…NFMV, PLFA…LPVL, LFWF…FGVM, and FGEM…FLVW. H246 contributes to the Cu cation binding site. The segment at residues 246–250 is a cross-link (1'-histidyl-3'-tyrosine (His-Tyr)); it reads HPEVY. Y250 contributes to the O2 binding site. Residues H295 and H296 each contribute to the Cu cation site. 2 helical membrane-spanning segments follow: residues 315–335 and 341–361; these read MVIA…IYGG and VPML…LTGV. H373 and D374 together coordinate Mg(2+). H381 contacts heme a3. Position 383 (H383) interacts with Fe(II)-heme a. 2 consecutive transmembrane segments (helical) span residues 388-408 and 418-438; these read MGAL…MFGL and HFWL…FLGL. Position 446 (P446) interacts with Ca(2+). Residues 461 to 481 traverse the membrane as a helical segment; that stretch reads MGSAMSVMSVLVGLKSVLVQL.

The protein belongs to the heme-copper respiratory oxidase family. Component of the cytochrome c oxidase (complex IV, CIV), a multisubunit enzyme composed of a catalytic core of 3 subunits and several supernumerary subunits. The complex exists as a monomer or a dimer and forms supercomplexes (SCs) in the inner mitochondrial membrane with ubiquinol-cytochrome c oxidoreductase (cytochrome b-c1 complex, complex III, CIII). It depends on heme as a cofactor. The cofactor is Cu cation.

It is found in the mitochondrion inner membrane. It catalyses the reaction 4 Fe(II)-[cytochrome c] + O2 + 8 H(+)(in) = 4 Fe(III)-[cytochrome c] + 2 H2O + 4 H(+)(out). The protein operates within energy metabolism; oxidative phosphorylation. In terms of biological role, component of the cytochrome c oxidase, the last enzyme in the mitochondrial electron transport chain which drives oxidative phosphorylation. The respiratory chain contains 3 multisubunit complexes succinate dehydrogenase (complex II, CII), ubiquinol-cytochrome c oxidoreductase (cytochrome b-c1 complex, complex III, CIII) and cytochrome c oxidase (complex IV, CIV), that cooperate to transfer electrons derived from NADH and succinate to molecular oxygen, creating an electrochemical gradient over the inner membrane that drives transmembrane transport and the ATP synthase. Cytochrome c oxidase is the component of the respiratory chain that catalyzes the reduction of oxygen to water. Electrons originating from reduced cytochrome c in the intermembrane space (IMS) are transferred via the dinuclear copper A center (CU(A)) of subunit 2 and heme A of subunit 1 to the active site in subunit 1, a binuclear center (BNC) formed by heme A3 and copper B (CU(B)). The BNC reduces molecular oxygen to 2 water molecules using 4 electrons from cytochrome c in the IMS and 4 protons from the mitochondrial matrix. This Debaryomyces hansenii (strain ATCC 36239 / CBS 767 / BCRC 21394 / JCM 1990 / NBRC 0083 / IGC 2968) (Yeast) protein is Cytochrome c oxidase subunit 1 (COX1).